Consider the following 103-residue polypeptide: Large ribosomal subunit protein bL21 (103 aa).

The protein belongs to the bacterial ribosomal protein bL21 family. As to quaternary structure, part of the 50S ribosomal subunit. Contacts protein L20.

Functionally, this protein binds to 23S rRNA in the presence of protein L20. This chain is Large ribosomal subunit protein bL21, found in Alkaliphilus oremlandii (strain OhILAs) (Clostridium oremlandii (strain OhILAs)).